Here is a 341-residue protein sequence, read N- to C-terminus: Cell division protein ZipA (341 aa).

Topologically, residues 1 to 6 are periplasmic; the sequence is MENLQL. Residues 7-27 form a helical membrane-spanning segment; sequence VLFVLGAIAIVAVLVHGFWSI. Residues 28 to 341 are Cytoplasmic-facing; that stretch reads RKQQPKSLKE…YLQRIRTQNS (314 aa). 2 disordered regions span residues 35 to 134 and 157 to 201; these read LKES…PVLS and QSSL…PEPE. Positions 90 to 100 are enriched in polar residues; the sequence is TLTSEGQMDSS. The span at 175 to 190 shows a compositional bias: low complexity; it reads SIEVPEPVSEPVLESV. A compositionally biased stretch (pro residues) spans 192-201; the sequence is EPEPVAPEPE.

This sequence belongs to the ZipA family. Interacts with FtsZ via their C-terminal domains.

It is found in the cell inner membrane. Essential cell division protein that stabilizes the FtsZ protofilaments by cross-linking them and that serves as a cytoplasmic membrane anchor for the Z ring. Also required for the recruitment to the septal ring of downstream cell division proteins. This is Cell division protein ZipA from Shewanella sediminis (strain HAW-EB3).